The following is a 334-amino-acid chain: Heat-inducible transcription repressor HrcA (334 aa).

It belongs to the HrcA family.

Negative regulator of class I heat shock genes (grpE-dnaK-dnaJ and groELS operons). Prevents heat-shock induction of these operons. The sequence is that of Heat-inducible transcription repressor HrcA from Albidiferax ferrireducens (strain ATCC BAA-621 / DSM 15236 / T118) (Rhodoferax ferrireducens).